Consider the following 399-residue polypeptide: Protein translocase subunit SecD (399 aa).

Transmembrane regions (helical) follow at residues 7–27 (IKTAFIVIILGIAIWILLTFP), 239–259 (VIGAILVVLFMILVFRFLGLV), 262–282 (IALLIYVVLDLAALKLLNATL), 286–306 (GVAGIILSIGMAVDANCLIFA), 329–351 (ALRAIIDSNVTTILAALILFYFG), and 357–381 (GFAVTLSLGVALSMFTQITITRTLL).

Belongs to the SecD/SecF family. SecD subfamily. Forms a complex with SecF. Part of the essential Sec protein translocation apparatus which comprises SecA, SecYEG and auxiliary proteins SecDF. Other proteins may also be involved.

The protein localises to the cell inner membrane. In terms of biological role, part of the Sec protein translocase complex. Interacts with the SecYEG preprotein conducting channel. SecDF uses the proton motive force (PMF) to complete protein translocation after the ATP-dependent function of SecA. The chain is Protein translocase subunit SecD from Dictyoglomus turgidum (strain DSM 6724 / Z-1310).